The sequence spans 275 residues: Large ribosomal subunit protein uL2c (275 aa).

Residues 225 to 275 form a disordered region; it reads MNPCDHPHGGGEGRSPIGRPRPVSPWGKPALGQRTRKGHKYSDQMILRRRK.

Belongs to the universal ribosomal protein uL2 family. Part of the 50S ribosomal subunit.

It localises to the plastid. The protein localises to the chloroplast. The chain is Large ribosomal subunit protein uL2c (rpl2) from Oltmannsiellopsis viridis (Marine flagellate).